A 1486-amino-acid chain; its full sequence is Glutamate synthase [NADPH] large chain (1486 aa).

The propeptide occupies 1-11 (MLYDKSLERDN). C12 functions as the Nucleophile in the catalytic mechanism. In terms of domain architecture, Glutamine amidotransferase type-2 spans 12 to 402 (CGFGLIAHIE…PGELMVIDTR (391 aa)). 1049 to 1101 (LVETQQALVANGLRHKIRLQVDGGLKTGVDIIKAAILGAESFGFGTGPMVALG) lines the FMN pocket. 3 residues coordinate [3Fe-4S] cluster: C1102, C1108, and C1113.

The protein belongs to the glutamate synthase family. Aggregate of 4 catalytic active heterodimers, consisting of a large and a small subunit. [3Fe-4S] cluster serves as cofactor. FAD is required as a cofactor. Requires FMN as cofactor.

The enzyme catalyses 2 L-glutamate + NADP(+) = L-glutamine + 2-oxoglutarate + NADPH + H(+). It functions in the pathway amino-acid biosynthesis; L-glutamate biosynthesis via GLT pathway; L-glutamate from 2-oxoglutarate and L-glutamine (NADP(+) route): step 1/1. The protein operates within energy metabolism; nitrogen metabolism. Catalyzes the conversion of L-glutamine and 2-oxoglutarate into two molecules of L-glutamate. This Escherichia coli (strain K12) protein is Glutamate synthase [NADPH] large chain (gltB).